We begin with the raw amino-acid sequence, 151 residues long: Ribosome maturation factor RimP (151 aa).

It belongs to the RimP family.

The protein localises to the cytoplasm. In terms of biological role, required for maturation of 30S ribosomal subunits. The polypeptide is Ribosome maturation factor RimP (Crocosphaera subtropica (strain ATCC 51142 / BH68) (Cyanothece sp. (strain ATCC 51142))).